Here is a 522-residue protein sequence, read N- to C-terminus: DEP domain-containing protein 7 (522 aa).

Residues 46–138 (LYTQVEVKKR…SSCSLYRFLN (93 aa)) form the DEP domain.

Belongs to the DEPDC7 family.

The polypeptide is DEP domain-containing protein 7 (depdc7) (Xenopus laevis (African clawed frog)).